The following is a 252-amino-acid chain: MGISLIGVEGMPLVGAGDDIAYLIISALNEGGEDLLDGDIIVIAETIVSKAEGNIISLEEIKPSPEALDIAERTGKDPSLVEAILGESSEIIRVGHDFIVSETRHGFVCANAGIDESNVDDGLATPLPRDPDGSAEKILRTLQEATGRELAVIISDTQGRPFREGAVGVAVGVAGLSPIWDRKGERDLYGRSLETTRVAVADELAAAASLVMGQADEGVPAVIIRGYPWGHLRSDGGVKPLLRPRELDVFRG.

GTP is bound by residues 11–14 (MPLV), 45–46 (ET), and Lys-50. A divalent metal cation is bound at residue Asp-115. Asn-118 is a binding site for GTP. Residues Asp-156, Thr-157, and Gln-214 each contribute to the a divalent metal cation site. 212–219 (MGQADEGV) provides a ligand contact to GTP.

It belongs to the CofE family. As to quaternary structure, homodimer. The cofactor is Mg(2+). Requires Mn(2+) as cofactor. K(+) serves as cofactor.

The catalysed reaction is oxidized coenzyme F420-0 + GTP + L-glutamate = oxidized coenzyme F420-1 + GDP + phosphate + H(+). It carries out the reaction oxidized coenzyme F420-1 + GTP + L-glutamate = oxidized coenzyme F420-2 + GDP + phosphate + H(+). The protein operates within cofactor biosynthesis; coenzyme F420 biosynthesis. In terms of biological role, catalyzes the GTP-dependent successive addition of two or more gamma-linked L-glutamates to the L-lactyl phosphodiester of 7,8-didemethyl-8-hydroxy-5-deazariboflavin (F420-0) to form coenzyme F420-0-glutamyl-glutamate (F420-2) or polyglutamated F420 derivatives. In Methanothermobacter thermautotrophicus (strain ATCC 29096 / DSM 1053 / JCM 10044 / NBRC 100330 / Delta H) (Methanobacterium thermoautotrophicum), this protein is Coenzyme F420:L-glutamate ligase.